The chain runs to 78 residues: MSKVCIVTGKRPAVGNNRSHAKNSTRRRFLPNLQTHRFWVESENRFVKLRLSAKGMRIIDKKGIDSVLTDIRANGVKI.

The protein belongs to the bacterial ribosomal protein bL28 family.

The sequence is that of Large ribosomal subunit protein bL28 from Pseudoalteromonas atlantica (strain T6c / ATCC BAA-1087).